The chain runs to 338 residues: Alcohol dehydrogenase (338 aa).

Positions 38, 61, 62, 92, 95, 98, 106, and 148 each coordinate Zn(2+).

This sequence belongs to the zinc-containing alcohol dehydrogenase family. Homotetramer. Zn(2+) serves as cofactor.

It catalyses the reaction a primary alcohol + NAD(+) = an aldehyde + NADH + H(+). The enzyme catalyses a secondary alcohol + NAD(+) = a ketone + NADH + H(+). The catalysed reaction is ethanol + NAD(+) = acetaldehyde + NADH + H(+). It carries out the reaction 1-propanol + NAD(+) = propanal + NADH + H(+). It catalyses the reaction butan-1-ol + NAD(+) = butanal + NADH + H(+). The enzyme catalyses propan-2-ol + NAD(+) = acetone + NADH + H(+). In terms of biological role, psychrophilic alcohol dehydrogenase that exhibits a wide range of substrate specificity, oxidizing mainly primary and secondary aliphatic alcohols, utilizing NAD(+) as a cosubstrate. In vitro, shows highest reaction rates for ethanol as a substrate and gradually decreases its reaction rates as the length and branching of the carbon chain of the alcohol substrates increase. To a lesser extent, is also able to reduce aldehydes and ketones. Do not catalyze the further oxidation of aldehydes to carboxylic acids. Cannot use NADP(+) instead of NAD(+). The protein is Alcohol dehydrogenase of Moraxella sp. (strain TAE123).